The chain runs to 98 residues: Signal peptidase complex subunit 1 (98 aa).

At 1–18 (MLDIQTHMDFAGQGKAER) the chain is on the cytoplasmic side. Residues 19 to 38 (WSRFIITFFGIVGLVYGAFV) form a helical membrane-spanning segment. The Lumenal portion of the chain corresponds to 39–42 (QQFS). Residues 43 to 65 (QTVYILGAGFVLSSLITIPPWPL) form a helical membrane-spanning segment. Residues 66–98 (YRRNALKWQKPIDTDAKSSSSESGDEGKKKKKQ) lie on the Cytoplasmic side of the membrane. Positions 78-98 (DTDAKSSSSESGDEGKKKKKQ) are disordered. Phosphoserine occurs at positions 84, 85, 86, and 88.

This sequence belongs to the SPCS1 family. As to quaternary structure, component of the signal peptidase complex (SPC) composed of a catalytic subunit twr/SEC11 and three accessory subunits Spase12/SPCS1, Spase25/SPCS2 and Spase22-23/SPCS3. The complex induces a local thinning of the ER membrane which is used to measure the length of the signal peptide (SP) h-region of protein substrates. This ensures the selectivity of the complex towards h-regions shorter than 18-20 amino acids.

The protein resides in the endoplasmic reticulum membrane. Functionally, component of the signal peptidase complex (SPC) which catalyzes the cleavage of N-terminal signal sequences from nascent proteins as they are translocated into the lumen of the endoplasmic reticulum. Dispensable for SPC enzymatic activity. Its function is as follows. (Microbial infection) Plays an important role in infection by flaviviruses such as West Nile virus and Dengue virus type 2. This chain is Signal peptidase complex subunit 1 (Spase12), found in Drosophila melanogaster (Fruit fly).